We begin with the raw amino-acid sequence, 79 residues long: MSVKKSPEELKKIFEKYAAKEGDPDQLSKEELKLLIQNELPALLKGSSSIDDLFKELDKNGDGEVSFEEFQVLVKKISQ.

Serine 2 carries the N-acetylserine modification. 2 EF-hand domains span residues 13-48 and 45-79; these read IFEK…KGSS and KGSS…KISQ. Residues glutamine 26 and glutamate 31 each coordinate Ca(2+). The residue at position 47 (serine 47) is a Phosphoserine. Residues aspartate 58, asparagine 60, aspartate 62, glutamate 64, and glutamate 69 each coordinate Ca(2+).

It belongs to the S-100 family.

The protein is Protein S100-G (S100G) of Equus caballus (Horse).